The sequence spans 551 residues: Adenine deaminase (551 aa).

This sequence belongs to the metallo-dependent hydrolases superfamily. Adenine deaminase family. Mn(2+) is required as a cofactor.

The enzyme catalyses adenine + H2O + H(+) = hypoxanthine + NH4(+). The protein is Adenine deaminase of Methanosarcina barkeri (strain Fusaro / DSM 804).